A 731-amino-acid chain; its full sequence is 1,4-alpha-glucan branching enzyme GlgB (731 aa).

The Nucleophile role is filled by Asp-409. Glu-462 (proton donor) is an active-site residue.

Belongs to the glycosyl hydrolase 13 family. GlgB subfamily. As to quaternary structure, monomer.

The enzyme catalyses Transfers a segment of a (1-&gt;4)-alpha-D-glucan chain to a primary hydroxy group in a similar glucan chain.. It functions in the pathway glycan biosynthesis; glycogen biosynthesis. Its function is as follows. Catalyzes the formation of the alpha-1,6-glucosidic linkages in glycogen by scission of a 1,4-alpha-linked oligosaccharide from growing alpha-1,4-glucan chains and the subsequent attachment of the oligosaccharide to the alpha-1,6 position. In Roseobacter denitrificans (strain ATCC 33942 / OCh 114) (Erythrobacter sp. (strain OCh 114)), this protein is 1,4-alpha-glucan branching enzyme GlgB.